A 237-amino-acid polypeptide reads, in one-letter code: Probable transcriptional regulatory protein WS1016 (237 aa).

This sequence belongs to the TACO1 family.

It is found in the cytoplasm. The protein is Probable transcriptional regulatory protein WS1016 of Wolinella succinogenes (strain ATCC 29543 / DSM 1740 / CCUG 13145 / JCM 31913 / LMG 7466 / NCTC 11488 / FDC 602W) (Vibrio succinogenes).